Consider the following 1322-residue polypeptide: MSLAHYCLLLAIVTLLGLTNVVSATTAACLPANSRKNGMNVNFYQYSLRDSSTYSNAAYMAYGYASKTKLGSVGGQTDISIDYNIPCVSSSGTFPCPQEDLYGNWGCKGIGACSNNPIIAYWSTDLFGFYTTPTNVTLEMTGYFLPPQTGSYTFKFATVDDSAILSVGGSIAFECCAQEQPPITSTNFTINGIKPWNGSPPDNITGTVYMYAGFYYPMKIVYSNAVAWGTLPISVTLPDGTTVSDDFEGYVYTFDNNLSQPNCTIPDPSNYTVSTTITTTEPWTGTFTSTSTEMTTVTGTNGVPTDETVIVIRTPTTASTIITTTEPWNSTFTSTSTELTTVTGTNGVRTDETIIVIRTPTTATTAITTTEPWNSTFTSTSTELTTVTGTNGLPTDETIIVIRTPTTATTAMTTTQPWNDTFTSTSTELTTVTGTNGLPTDETIIVIRTPTTATTAMTTTQPWNDTFTSTSTELTTVTGTNGLPTDETIIVIRTPTTATTAMTTTQPWNDTFTSTSTEITTVTGTNGLPTDETIIVIRTPTTATTAMTTTQPWNDTFTSTSTEMTTVTGTNGLPTDETIIVIRTPTTATTAITTTEPWNSTFTSTSTEMTTVTGTNGLPTDETIIVIRTPTTATTAITTTQPWNDTFTSTSTEMTTVTGTNGLPTDETIIVIRTPTTATTAMTTTQPWNDTFTSTSTEITTVTGTNGLPTDETIIVIRTPTTATTAMTTTQPWNDTFTSTSTEMTTVTGTNGVPTDETVIVIRTPTSEGLISTTTEPWTGTFTSTSTEMTTVTGTNGQPTDETVIVIRTPTSEGLVTTTTEPWTGTFTSTSTEMTTITGTNGQPTDETVIIVKTPTTAISSSLSSSSGQITSFITSARPIITPFYPSNGTSVISSSVISSSDTSSLVISSSVTSSLVTSSPVISSSFISSPVISSTTTSASILSESSKSSVIPTSSSTSGSSESETGSASSASSSSSISSESPKSTYSSSSLPPVTSATTSQEITSSLPPVTTTKTSEQTTLVTVTSCESHVCTESISSAIVSTATVTVSGATTEYTTWCPISTTEITKQTTETTKQTKGTTEQTTETTKQTTVVTISSCESDVCSKTASPAIVSTSTATINGVTTEYTTWCPISTTESKQQTTLVTVTSCGSGVCSETTSPAIVSTATATVNDVVTVYSTWRPQTTNEQSVSSKMNSATSETTTNTGAAETTTSTGAAETKTVVTSSISRFNHAETQTASATDVIGHSSSVVSVSETGNTKSLTSSGLSTMSQQPRSTPASSMVGSSTASLEISTYAGSANSLLAGSGLSVFIASLLLAII.

A signal peptide spans 1–24; sequence MSLAHYCLLLAIVTLLGLTNVVSA. In terms of domain architecture, PA14 spans 74-249; the sequence is GGQTDISIDY…GTTVSDDFEG (176 aa). 6 N-linked (GlcNAc...) asparagine glycosylation sites follow: Asn-135, Asn-187, Asn-203, Asn-257, Asn-262, and Asn-270. The tract at residues 197 to 240 is sugar recognition; the sequence is NGSPPDNITGTVYMYAGFYYPMKIVYSNAVAWGTLPISVTLPDG. A run of 13 repeats spans residues 278 to 322, 323 to 367, 368 to 412, 413 to 457, 458 to 502, 503 to 547, 548 to 592, 593 to 637, 638 to 682, 683 to 727, 728 to 772, 773 to 817, and 818 to 862. Positions 278–862 are 13 X 45 AA approximate tandem repeats, Thr-rich; sequence TTTEPWTGTF…KTPTTAISSS (585 aa). An N-linked (GlcNAc...) asparagine glycan is attached at Asn-329. 8 N-linked (GlcNAc...) asparagine glycosylation sites follow: Asn-419, Asn-464, Asn-509, Asn-554, Asn-599, Asn-644, Asn-689, and Asn-734. Disordered stretches follow at residues 770–799 and 816–843; these read LIST…NGQP and VTTT…TNGQ. 2 stretches are compositionally biased toward low complexity: residues 773–795 and 817–840; these read TTTE…VTGT and TTTT…ITGT. Asn-888 is a glycosylation site (N-linked (GlcNAc...) asparagine). Tandem repeats lie at residues 892–906, 907–921, and 922–936. The segment at 892–936 is 3 X 15 AA approximate repeats, Ser-rich; sequence VISSSVISSSDTSSLVISSSVTSSLVTSSPVISSSFISSPVISST. Low complexity predominate over residues 950 to 1001; the sequence is SVIPTSSSTSGSSESETGSASSASSSSSISSESPKSTYSSSSLPPVTSATTS. Residues 950–1018 form a disordered region; that stretch reads SVIPTSSSTS…PPVTTTKTSE (69 aa). Polar residues predominate over residues 1002–1018; the sequence is QEITSSLPPVTTTKTSE. 3 tandem repeats follow at residues 1013 to 1063, 1085 to 1135, and 1136 to 1186. The 3 X 51 AA approximate repeats, Thr-rich stretch occupies residues 1013-1186; that stretch reads TTKTSEQTTL…TVYSTWRPQT (174 aa). Over residues 1186–1196 the composition is skewed to polar residues; that stretch reads TTNEQSVSSKM. 2 disordered regions span residues 1186 to 1221 and 1256 to 1284; these read TTNE…AAET and SETG…ASSM. Residues 1197–1221 show a composition bias toward low complexity; it reads NSATSETTTNTGAAETTTSTGAAET. Residues 1257 to 1284 show a composition bias toward polar residues; the sequence is ETGNTKSLTSSGLSTMSQQPRSTPASSM. A lipid anchor (GPI-anchor amidated glycine) is attached at Gly-1299. Positions 1300–1322 are cleaved as a propeptide — removed in mature form; it reads SANSLLAGSGLSVFIASLLLAII.

Belongs to the flocculin family. Post-translationally, the GPI-anchor is attached to the protein in the endoplasmic reticulum and serves to target the protein to the cell surface. There, the glucosamine-inositol phospholipid moiety is cleaved off and the GPI-modified mannoprotein is covalently attached via its lipidless GPI glycan remnant to the 1,6-beta-glucan of the outer cell wall layer.

It localises to the secreted. The protein resides in the cell wall. It is found in the membrane. Functionally, cell wall protein that participates directly in adhesive cell-cell interactions during yeast flocculation, a reversible, asexual and Ca(2+)-dependent process in which cells adhere to form aggregates (flocs) consisting of thousands of cells. The lectin-like protein sticks out of the cell wall of flocculent cells and selectively binds mannose residues in the cell walls of adjacent cells. The sequence is that of Flocculation protein FLO9 (FLO9) from Saccharomyces cerevisiae (strain ATCC 204508 / S288c) (Baker's yeast).